Reading from the N-terminus, the 1149-residue chain is Guanine nucleotide exchange factor DBS (1149 aa).

Residues 52 to 224 (AATASDEIMH…DLGGTLDYCH (173 aa)) enclose the CRAL-TRIO domain. The Spectrin repeat unit spans residues 351–456 (LQLRHFEQGF…VTRRRGLLSK (106 aa)). Phosphoserine occurs at positions 457, 462, 471, and 480. Positions 503–529 (LETGAENKIQELNEIYKEYECILNQDL) form a coiled coil. The interval 555 to 627 (KKLAAKQTRP…RTSSTGEEEE (73 aa)) is disordered. Residues 583-594 (PGSWRSSENSSS) are compositionally biased toward low complexity. The segment covering 607 to 616 (AKSEMSEPRQ) has biased composition (basic and acidic residues). Ser-621 is subject to Phosphoserine. Position 622 is a phosphothreonine (Thr-622). The 181-residue stretch at 632 to 812 (LRRHVMNELL…LGILKAVNDS (181 aa)) folds into the DH domain. A PH domain is found at 841-950 (TDHKKGHTKV…IRKVLTSQLQ (110 aa)). A disordered region spans residues 956–1033 (SQHRALEQSH…EAPEEDGGWS (78 aa)). The segment covering 966–978 (SLPLPTPSSTSPT) has biased composition (low complexity). Ser-1033, Ser-1034, Ser-1041, and Ser-1042 each carry phosphoserine. The SH3 domain occupies 1055–1116 (LVPGKYTVVM…PASSLSTLLG (62 aa)).

This sequence belongs to the MCF2 family. In terms of assembly, interacts with GTP-bound RAC1. Interacts with CDC42. Interacts with RHOA. Interacts with CCPG1, which results in specific inhibition of its exchange activity toward RHOA, but does not affect its activity on CDC42. As to expression, expressed at low levels in several hemopoietic cell lines and in thymus and spleen, and at higher levels in other tissues, particularly in brain.

It localises to the cytoplasm. The protein localises to the cell membrane. In terms of biological role, guanine nucleotide exchange factor that catalyzes guanine nucleotide exchange on RHOA and CDC42, and thereby contributes to the regulation of RHOA and CDC42 signaling pathways. Seems to lack activity with RAC1. Becomes activated and highly tumorigenic by truncation of the N-terminus. This is Guanine nucleotide exchange factor DBS (Mcf2l) from Mus musculus (Mouse).